The sequence spans 224 residues: UPF0758 protein Pfl01_5539 (224 aa).

Positions 102–224 (ALENPQVVRD…PLSMAECGWM (123 aa)) constitute an MPN domain. Residues His-173, His-175, and Asp-186 each contribute to the Zn(2+) site. The short motif at 173–186 (HNHPSGNSDPSQAD) is the JAMM motif element.

The protein belongs to the UPF0758 family.

In Pseudomonas fluorescens (strain Pf0-1), this protein is UPF0758 protein Pfl01_5539.